Reading from the N-terminus, the 298-residue chain is 5'-AMP-activated protein kinase subunit beta (298 aa).

The interval 1-98 (MGNVQSQEGE…KTHQPYSGPC (98 aa)) is disordered. Residues 19–30 (QDATTTPDNANN) show a composition bias toward polar residues. Over residues 48 to 59 (LNQEGEMSDDNQ) the composition is skewed to acidic residues. The segment covering 60–77 (QEGGNNRTSQNGTSGSSG) has biased composition (polar residues). Over residues 78 to 91 (HTKRRSQTSGKKTH) the composition is skewed to basic residues. Residue 250–252 (DQS) coordinates ADP.

This sequence belongs to the 5'-AMP-activated protein kinase beta subunit family. AMPK is a heterotrimer of an alpha catalytic subunit (ssp2), a beta (amk2) and a gamma non-catalytic subunits (cbs2). The beta subunit serves as a bridge between the catalytic and the regulatory subunit.

It localises to the cytoplasm. Functionally, beta subunit of AMP-activated protein kinase (AMPK), which is required for transcriptional, metabolic, and developmental adaptations in response to glucose limitation. Has a structural role, mediating heterotrimer formation, and a regulatory role, defining carbon source-regulated subcellular location and substrate specificity of the AMPK kinase complex. This is 5'-AMP-activated protein kinase subunit beta (amk2) from Schizosaccharomyces pombe (strain 972 / ATCC 24843) (Fission yeast).